The chain runs to 372 residues: MDAALLLNVEGVKKTILHGGTGELPNFITGSRVIFHFRTMKCDEERTVIDDSREVGQPMHIIIGNMFKLEVWEILLTSMRVREVAEFWCDTIHTGVYPILSRSLRQMAQGKDPTEWHVHTCGLANMFAYHTLGYEDLDELQKEPQPLIFVIELLQVDAPSDYQRETWNLSNHEKMKVVPVLHGEGNRLFKLGRYEEASSKYQEAIICLRNLQTKEKPWEVQWLKLEKMINTLILNYCQCLLKKEEYYEVLEHTSDILRHHPGIVKAYYVRARAHAEVWNEAEAKADLQKVLELEPSMQKAVRRELRLLENRMAEKQEEERLRCRNMLSQGATWSPAEPPAEPPAESSTEPPAEPPAEPPAELTLTPGHPLQH.

Positions 53–145 constitute a PPIase FKBP-type domain; that stretch reads REVGQPMHII…DLDELQKEPQ (93 aa). 3 TPR repeats span residues 178–211, 230–263, and 264–297; these read VPVL…LRNL, NTLI…HPGI, and VKAY…EPSM. A disordered region spans residues 325-372; it reads NMLSQGATWSPAEPPAEPPAESSTEPPAEPPAEPPAELTLTPGHPLQH.

As to quaternary structure, interacts with NUB1.

The protein resides in the cytoplasm. Its subcellular location is the nucleus. Functionally, may be important in protein trafficking and/or protein folding and stabilization. The sequence is that of Aryl-hydrocarbon-interacting protein-like 1 (AIPL1) from Saimiri boliviensis boliviensis (Bolivian squirrel monkey).